A 167-amino-acid polypeptide reads, in one-letter code: Putative N-acetylgalactosamine-6-phosphate deacetylase (167 aa).

The protein belongs to the metallo-dependent hydrolases superfamily. NagA family.

It catalyses the reaction N-acetyl-D-galactosamine 6-phosphate + H2O = D-galactosamine 6-phosphate + acetate. This is Putative N-acetylgalactosamine-6-phosphate deacetylase (agaA) from Escherichia coli (strain K12).